Consider the following 331-residue polypeptide: Biotin synthase (331 aa).

A Radical SAM core domain is found at Phe48–Arg278. [4Fe-4S] cluster contacts are provided by Cys66, Cys70, and Cys73. Residues Cys110, Cys143, Cys203, and Arg273 each contribute to the [2Fe-2S] cluster site.

It belongs to the radical SAM superfamily. Biotin synthase family. In terms of assembly, homodimer. [4Fe-4S] cluster serves as cofactor. It depends on [2Fe-2S] cluster as a cofactor.

It catalyses the reaction (4R,5S)-dethiobiotin + (sulfur carrier)-SH + 2 reduced [2Fe-2S]-[ferredoxin] + 2 S-adenosyl-L-methionine = (sulfur carrier)-H + biotin + 2 5'-deoxyadenosine + 2 L-methionine + 2 oxidized [2Fe-2S]-[ferredoxin]. It functions in the pathway cofactor biosynthesis; biotin biosynthesis; biotin from 7,8-diaminononanoate: step 2/2. Catalyzes the conversion of dethiobiotin (DTB) to biotin by the insertion of a sulfur atom into dethiobiotin via a radical-based mechanism. The protein is Biotin synthase of Hydrogenobaculum sp. (strain Y04AAS1).